A 473-amino-acid chain; its full sequence is Ribulose bisphosphate carboxylase large chain (473 aa).

2 residues coordinate substrate: Asn116 and Thr166. The Proton acceptor role is filled by Lys168. A substrate-binding site is contributed by Lys170. Mg(2+) contacts are provided by Lys194, Asp196, and Glu197. Lys194 carries the N6-carboxylysine modification. The active-site Proton acceptor is the His287. Residues Arg288, His320, and Ser372 each coordinate substrate.

This sequence belongs to the RuBisCO large chain family. Type I subfamily. Heterohexadecamer of 8 large chains and 8 small chains. In R.sphaeroides the complex is approximately 500 kDa. It depends on Mg(2+) as a cofactor.

It carries out the reaction 2 (2R)-3-phosphoglycerate + 2 H(+) = D-ribulose 1,5-bisphosphate + CO2 + H2O. The enzyme catalyses D-ribulose 1,5-bisphosphate + O2 = 2-phosphoglycolate + (2R)-3-phosphoglycerate + 2 H(+). In terms of biological role, ruBisCO catalyzes two reactions: the carboxylation of D-ribulose 1,5-bisphosphate, the primary event in carbon dioxide fixation, as well as the oxidative fragmentation of the pentose substrate. Both reactions occur simultaneously and in competition at the same active site. In Thiobacillus denitrificans (strain ATCC 25259 / T1), this protein is Ribulose bisphosphate carboxylase large chain.